The primary structure comprises 510 residues: O-acetyltransferase pyr7 (510 aa).

It belongs to the fumigaclavine B O-acetyltransferase family.

The protein operates within secondary metabolite biosynthesis; terpenoid biosynthesis. O-acetyltransferase; part of the gene cluster that mediates the biosynthesis of pyripyropene A, a specific human acyl-coenzyme A:cholesterol acyltransferase 2 inhibitor. The first step of the pathway is the synthesis of nicotinyl-CoA from nicotinic acid by the nicotinic acid-CoA ligase pyr1. Nicotinyl-CoA is then a substrate of polyketide synthase pyr2 to produce 4-hydroxy-6-(3-pyridinyl)-2H-pyran-2-one (HPPO) which is further prenylated by the polyprenyl transferase pyr6 to yield farnesyl-HPPO. The next steps consist of an epoxidation of farnesyl-HPPO to epoxyfarnesyl-HPPO by FAD-dependent monooxygenase pyr5 and a cyclization of the terpenoid portion by the terpene cyclase pyr4 to yield deacetyl-pyripyropene E. The 2 cytochrome P450 monooxygenases pyr3 and pyr9, and the 2 acetyltransferases pyr7 and pyr8 are involved in the conversion of deacetyl-pyripyropene E into pyripyropene A through several cycles of oxidation and acetylation steps. Pyr7 acetylates deacetyl-pyripyropene E to pyripyropene E which is oxidized to 11-deacetyl-pyripyropene O by pyr3, which is in turn acetylated into pyripyropene O by pyr8. Pyripyropene O is then oxidized to deacetyl-pyripyropene A by pyr9. Deacetyl-pyripyropene A is finally acetylated to pyripyropene A by pyr8. In Aspergillus fumigatus (strain ATCC MYA-4609 / CBS 101355 / FGSC A1100 / Af293) (Neosartorya fumigata), this protein is O-acetyltransferase pyr7.